Here is a 196-residue protein sequence, read N- to C-terminus: Interleukin-23 subunit alpha (196 aa).

The signal sequence occupies residues 1-21; the sequence is MLDCRAVIMLWLLPWVTQGLA.

This sequence belongs to the IL-6 superfamily. Heterodimer with IL12B; disulfide-linked. The heterodimer is known as interleukin IL-23. Interacts with IL23R; this interaction enables recruitment of IL12RB1. Secreted by activated dendritic cells (at protein level). Detected in various tissues with higher expression in polarized Th1 cells and activated macrophages.

Its subcellular location is the secreted. Functionally, associates with IL12B to form the IL-23 interleukin, a heterodimeric cytokine which functions in innate and adaptive immunity. IL-23 may constitute with IL-17 an acute response to infection in peripheral tissues. IL-23 binds to a heterodimeric receptor complex composed of IL12RB1 and IL23R, activates the Jak-Stat signaling cascade, stimulates memory rather than naive T-cells and promotes production of pro-inflammatory cytokines. IL-23 induces autoimmune inflammation and thus may be responsible for autoimmune inflammatory diseases and may be important for tumorigenesis. Associates with IL12B to form the pro-inflammatory cytokine IL-23 that plays different roles in innate and adaptive immunity. Released by antigen-presenting cells such as dendritic cells or macrophages, binds to a heterodimeric receptor complex composed of IL12RB1 and IL23R to activate JAK2 and TYK2 which then phosphorylate the receptor to form a docking site leading to the phosphorylation of STAT3 and STAT4. This process leads to activation of several pathways including p38 MAPK or NF-kappa-B and promotes the production of pro-inflammatory cytokines such as interleukin-17A/IL17A. In turn, participates in the early and effective intracellular bacterial clearance. Promotes the expansion and survival of T-helper 17 cells, a CD4-positive helper T-cell subset that produces IL-17, as well as other IL-17-producing cells. The sequence is that of Interleukin-23 subunit alpha (Il23a) from Mus musculus (Mouse).